We begin with the raw amino-acid sequence, 436 residues long: Cyclic nucleotide-binding domain-containing protein 1 (436 aa).

Basic and acidic residues predominate over residues 89–105; that stretch reads EQRELNEGKEESQHQQP. The tract at residues 89–108 is disordered; it reads EQRELNEGKEESQHQQPDDS. 322–436 is an a nucleoside 3',5'-cyclic phosphate binding site; the sequence is YYEEWPTLSI…IIEDKDLFVA (115 aa).

The chain is Cyclic nucleotide-binding domain-containing protein 1 (CNBD1) from Homo sapiens (Human).